A 93-amino-acid chain; its full sequence is Small ribosomal subunit protein uS19c (93 aa).

This sequence belongs to the universal ribosomal protein uS19 family.

The protein localises to the plastid. It is found in the chloroplast. Protein S19 forms a complex with S13 that binds strongly to the 16S ribosomal RNA. The protein is Small ribosomal subunit protein uS19c of Stigeoclonium helveticum (Green alga).